Reading from the N-terminus, the 586-residue chain is Probable zinc metalloprotease EGY3, chloroplastic (586 aa).

Residues 1–54 (MSSSSLVTSLLFSSSSSSNTATSTSSRRSFSLFSKNQYCKPSPLRRSSSLLLVR) constitute a chloroplast transit peptide. Residues 62–73 (EEKAAPAAESHH) are compositionally biased toward basic and acidic residues. The tract at residues 62-118 (EEKAAPAAESHHAGGGQDDAATASHHAVEGENGVADADGGGVKKSKEELEEEEQQEV) is disordered. The stretch at 103–195 (VKKSKEELEE…NTFKALDLNK (93 aa)) forms a coiled coil. A run of 7 helical transmembrane segments spans residues 287–307 (LSAV…SGFF), 318–338 (VSDV…SEIA), 389–409 (ASAY…DGSL), 427–447 (PLLS…GNVL), 454–474 (VGVP…VTSL), 506–526 (VALG…WGLF), and 550–570 (YAWG…NGGG).

This sequence belongs to the peptidase M50B family.

The protein resides in the plastid. The protein localises to the chloroplast membrane. Functionally, probable membrane-associated metalloprotease that may be involved in chloroplast development. In Oryza sativa subsp. indica (Rice), this protein is Probable zinc metalloprotease EGY3, chloroplastic (EGY3).